Here is a 78-residue protein sequence, read N- to C-terminus: Putative defensin-like protein 288 (78 aa).

The signal sequence occupies residues 1–21; that stretch reads MSNLRLTIAVFLAALFQTLWW.

Belongs to the DEFL family.

It localises to the secreted. This is Putative defensin-like protein 288 from Arabidopsis thaliana (Mouse-ear cress).